We begin with the raw amino-acid sequence, 409 residues long: Multifunctional CCA protein (409 aa).

Positions 8 and 11 each coordinate ATP. Residues Gly-8 and Arg-11 each contribute to the CTP site. Residues Asp-21 and Asp-23 each coordinate Mg(2+). 3 residues coordinate ATP: Arg-91, Arg-137, and Arg-140. Arg-91, Arg-137, and Arg-140 together coordinate CTP. The HD domain maps to Thr-228–Tyr-329.

The protein belongs to the tRNA nucleotidyltransferase/poly(A) polymerase family. Bacterial CCA-adding enzyme type 1 subfamily. In terms of assembly, monomer. Can also form homodimers and oligomers. Mg(2+) is required as a cofactor. The cofactor is Ni(2+).

The enzyme catalyses a tRNA precursor + 2 CTP + ATP = a tRNA with a 3' CCA end + 3 diphosphate. It carries out the reaction a tRNA with a 3' CCA end + 2 CTP + ATP = a tRNA with a 3' CCACCA end + 3 diphosphate. Its function is as follows. Catalyzes the addition and repair of the essential 3'-terminal CCA sequence in tRNAs without using a nucleic acid template. Adds these three nucleotides in the order of C, C, and A to the tRNA nucleotide-73, using CTP and ATP as substrates and producing inorganic pyrophosphate. tRNA 3'-terminal CCA addition is required both for tRNA processing and repair. Also involved in tRNA surveillance by mediating tandem CCA addition to generate a CCACCA at the 3' terminus of unstable tRNAs. While stable tRNAs receive only 3'-terminal CCA, unstable tRNAs are marked with CCACCA and rapidly degraded. The sequence is that of Multifunctional CCA protein from Pseudomonas fluorescens (strain SBW25).